The following is a 154-amino-acid chain: Protein Smg homolog (154 aa).

Belongs to the Smg family.

The polypeptide is Protein Smg homolog (Aromatoleum aromaticum (strain DSM 19018 / LMG 30748 / EbN1) (Azoarcus sp. (strain EbN1))).